The sequence spans 270 residues: Bifunctional folate synthesis protein (270 aa).

The tract at residues 1 to 119 (MDQLQIKDLE…TCSVTIHRRK (119 aa)) is DHNA. Substrate contacts are provided by residues E21, Y53, and 72-73 (IE). Catalysis depends on K99, which acts as the Proton donor/acceptor; for DHNA activity. The HPPK stretch occupies residues 120-270 (QRAFIALGSN…IRNLYDALKK (151 aa)). Residues 160–163 (TEPW), 171–173 (FAN), 192–195 (LAIE), 200–215 (RVRE…DLDL), 227–233 (DLILPHP), and 238–240 (RLF) each bind ATP. 2 residues coordinate Mg(2+): D212 and D214.

It in the N-terminal section; belongs to the DHNA family. The protein in the C-terminal section; belongs to the HPPK family. As to quaternary structure, homotrimer or homotetramer.

The enzyme catalyses 7,8-dihydroneopterin = 6-hydroxymethyl-7,8-dihydropterin + glycolaldehyde. It carries out the reaction 6-hydroxymethyl-7,8-dihydropterin + ATP = (7,8-dihydropterin-6-yl)methyl diphosphate + AMP + H(+). The protein operates within cofactor biosynthesis; tetrahydrofolate biosynthesis; 2-amino-4-hydroxy-6-hydroxymethyl-7,8-dihydropteridine diphosphate from 7,8-dihydroneopterin triphosphate: step 3/4. It functions in the pathway cofactor biosynthesis; tetrahydrofolate biosynthesis; 2-amino-4-hydroxy-6-hydroxymethyl-7,8-dihydropteridine diphosphate from 7,8-dihydroneopterin triphosphate: step 4/4. In terms of biological role, catalyzes two sequential steps of tetrahydrofolate biosynthesis, the conversion of 7,8-dihydroneopterin to 6-hydroxymethyl-7,8-dihydropterin diphosphate. The protein is Bifunctional folate synthesis protein of Streptococcus pneumoniae serotype 4 (strain ATCC BAA-334 / TIGR4).